Here is a 66-residue protein sequence, read N- to C-terminus: Large ribosomal subunit protein uL29 (66 aa).

It belongs to the universal ribosomal protein uL29 family.

The chain is Large ribosomal subunit protein uL29 from Allorhizobium ampelinum (strain ATCC BAA-846 / DSM 112012 / S4) (Agrobacterium vitis (strain S4)).